A 333-amino-acid chain; its full sequence is Phosphate acyltransferase (333 aa).

Belongs to the PlsX family. As to quaternary structure, homodimer. Probably interacts with PlsY.

It is found in the cytoplasm. It catalyses the reaction a fatty acyl-[ACP] + phosphate = an acyl phosphate + holo-[ACP]. It participates in lipid metabolism; phospholipid metabolism. Functionally, catalyzes the reversible formation of acyl-phosphate (acyl-PO(4)) from acyl-[acyl-carrier-protein] (acyl-ACP). This enzyme utilizes acyl-ACP as fatty acyl donor, but not acyl-CoA. This is Phosphate acyltransferase from Lactobacillus helveticus (strain DPC 4571).